The chain runs to 70 residues: Small ribosomal subunit protein bS21 (70 aa).

It belongs to the bacterial ribosomal protein bS21 family.

This chain is Small ribosomal subunit protein bS21, found in Campylobacter curvus (strain 525.92).